A 156-amino-acid chain; its full sequence is Ribosomal RNA large subunit methyltransferase H (156 aa).

S-adenosyl-L-methionine is bound by residues leucine 73, glycine 104, and 123–128 (IGPLTL).

This sequence belongs to the RNA methyltransferase RlmH family. As to quaternary structure, homodimer.

Its subcellular location is the cytoplasm. The enzyme catalyses pseudouridine(1915) in 23S rRNA + S-adenosyl-L-methionine = N(3)-methylpseudouridine(1915) in 23S rRNA + S-adenosyl-L-homocysteine + H(+). In terms of biological role, specifically methylates the pseudouridine at position 1915 (m3Psi1915) in 23S rRNA. In Xanthomonas campestris pv. campestris (strain 8004), this protein is Ribosomal RNA large subunit methyltransferase H.